A 329-amino-acid polypeptide reads, in one-letter code: Ketol-acid reductoisomerase (NADP(+)) (329 aa).

In terms of domain architecture, KARI N-terminal Rossmann spans 2–182 (TQLFYDTDAD…GGTRAGILET (181 aa)). Residues 25–28 (YGSQ), serine 51, serine 53, and 83–86 (DEFQ) each bind NADP(+). Histidine 108 is an active-site residue. Glycine 134 contacts NADP(+). The KARI C-terminal knotted domain maps to 183-328 (NFKEETETDL…KGLRSMFSWL (146 aa)). Positions 191, 195, 227, and 231 each coordinate Mg(2+). Residue serine 252 participates in substrate binding.

Belongs to the ketol-acid reductoisomerase family. The cofactor is Mg(2+).

It carries out the reaction (2R)-2,3-dihydroxy-3-methylbutanoate + NADP(+) = (2S)-2-acetolactate + NADPH + H(+). The catalysed reaction is (2R,3R)-2,3-dihydroxy-3-methylpentanoate + NADP(+) = (S)-2-ethyl-2-hydroxy-3-oxobutanoate + NADPH + H(+). The protein operates within amino-acid biosynthesis; L-isoleucine biosynthesis; L-isoleucine from 2-oxobutanoate: step 2/4. Its pathway is amino-acid biosynthesis; L-valine biosynthesis; L-valine from pyruvate: step 2/4. In terms of biological role, involved in the biosynthesis of branched-chain amino acids (BCAA). Catalyzes an alkyl-migration followed by a ketol-acid reduction of (S)-2-acetolactate (S2AL) to yield (R)-2,3-dihydroxy-isovalerate. In the isomerase reaction, S2AL is rearranged via a Mg-dependent methyl migration to produce 3-hydroxy-3-methyl-2-ketobutyrate (HMKB). In the reductase reaction, this 2-ketoacid undergoes a metal-dependent reduction by NADPH to yield (R)-2,3-dihydroxy-isovalerate. The protein is Ketol-acid reductoisomerase (NADP(+)) of Prochlorococcus marinus (strain MIT 9312).